Consider the following 302-residue polypeptide: Short-chain dehydrogenase/reductase 1 (302 aa).

NADP(+) contacts are provided by residues Asn20–Leu23, Arg43, Asp71–Val72, and Asn98. Residue Ser170 coordinates substrate. Residues Tyr226, Lys230, and Val257–Asn262 contribute to the NADP(+) site. The Proton acceptor role is filled by Tyr226.

It belongs to the short-chain dehydrogenases/reductases (SDR) family. Mainly expressed in flowers and flower buds, to a lesser extent in leaves and, at low levels, in stems and roots.

Its pathway is secondary metabolite biosynthesis; terpenoid biosynthesis. In terms of biological role, component of the oleanane-type triterpene saponins (e.g. saponarioside A and saponarioside B) biosynthetic pathway, leading to the production of natural products with detergent properties used as traditional sources of soap. A dehydrogenase/reductase that, together with UGT74CD1, mediates the conversion of QA-tri to QA-triF; UGT74CD1 may transfer 4-keto-6-deoxy-glucose to QA-tri, which is in turn reduced to D-fucose by SDR1, thus leading to QA-triF formation via the initiation of the C-28 sugar chain. The polypeptide is Short-chain dehydrogenase/reductase 1 (Saponaria officinalis (Common soapwort)).